The sequence spans 446 residues: Neuraminidase (446 aa).

The hypervariable stalk region stretch occupies residues His13–Ser65. N-linked (GlcNAc...) asparagine; by host glycosylation is found at Asn38, Asn47, and Asn63. Residues Gln68–Ile446 form a head of neuraminidase region. Cystine bridges form between Cys69–Cys394, Cys101–Cys106, Cys160–Cys207, Cys209–Cys214, Cys255–Cys268, Cys257–Cys266, Cys295–Cys314, and Cys398–Cys424. Arg95 lines the substrate pocket. Asn123 is a glycosylation site (N-linked (GlcNAc...) asparagine; by host). Catalysis depends on Asp128, which acts as the Proton donor/acceptor. Arg129 provides a ligand contact to substrate. N-linked (GlcNAc...) asparagine; by host glycosylation is found at Asn177 and Asn211. Position 253–254 (Glu253–Glu254) interacts with substrate. Arg269 lines the substrate pocket. Positions 270, 274, and 301 each coordinate Ca(2+). The disordered stretch occupies residues Arg304–Lys327. Positions Arg308–Asp320 are enriched in polar residues. Residue Arg348 coordinates substrate. Asn379 is a glycosylation site (N-linked (GlcNAc...) asparagine; by host). Catalysis depends on Tyr383, which acts as the Nucleophile.

This sequence belongs to the glycosyl hydrolase 34 family. In terms of assembly, homotetramer. Ca(2+) serves as cofactor. N-glycosylated.

The protein resides in the virion membrane. The protein localises to the host apical cell membrane. It carries out the reaction Hydrolysis of alpha-(2-&gt;3)-, alpha-(2-&gt;6)-, alpha-(2-&gt;8)- glycosidic linkages of terminal sialic acid residues in oligosaccharides, glycoproteins, glycolipids, colominic acid and synthetic substrates.. Inhibited by the neuraminidase inhibitors zanamivir (Relenza) and oseltamivir (Tamiflu). These drugs interfere with the release of progeny virus from infected cells and are effective against all influenza strains. Resistance to neuraminidase inhibitors is quite rare. In terms of biological role, catalyzes the removal of terminal sialic acid residues from viral and cellular glycoconjugates. Cleaves off the terminal sialic acids on the glycosylated HA during virus budding to facilitate virus release. Additionally helps virus spread through the circulation by further removing sialic acids from the cell surface. These cleavages prevent self-aggregation and ensure the efficient spread of the progeny virus from cell to cell. Otherwise, infection would be limited to one round of replication. Described as a receptor-destroying enzyme because it cleaves a terminal sialic acid from the cellular receptors. May facilitate viral invasion of the upper airways by cleaving the sialic acid moieties on the mucin of the airway epithelial cells. Likely to plays a role in the budding process through its association with lipid rafts during intracellular transport. May additionally display a raft-association independent effect on budding. Plays a role in the determination of host range restriction on replication and virulence. Sialidase activity in late endosome/lysosome traffic seems to enhance virus replication. In Influenza A virus (strain A/Swine/Hong Kong/127/1982 H3N2), this protein is Neuraminidase.